The chain runs to 123 residues: Ribonuclease P protein component (123 aa).

The protein belongs to the RnpA family. Consists of a catalytic RNA component (M1 or rnpB) and a protein subunit.

It carries out the reaction Endonucleolytic cleavage of RNA, removing 5'-extranucleotides from tRNA precursor.. In terms of biological role, RNaseP catalyzes the removal of the 5'-leader sequence from pre-tRNA to produce the mature 5'-terminus. It can also cleave other RNA substrates such as 4.5S RNA. The protein component plays an auxiliary but essential role in vivo by binding to the 5'-leader sequence and broadening the substrate specificity of the ribozyme. The chain is Ribonuclease P protein component from Bordetella petrii (strain ATCC BAA-461 / DSM 12804 / CCUG 43448).